Here is a 150-residue protein sequence, read N- to C-terminus: Catabolic 3-dehydroquinase 2 (150 aa).

The Proton acceptor role is filled by tyrosine 23. Residues asparagine 74, histidine 80, and aspartate 87 each coordinate substrate. Histidine 100 functions as the Proton donor in the catalytic mechanism. Residues 101-102 and arginine 111 contribute to the substrate site; that span reads IT.

This sequence belongs to the type-II 3-dehydroquinase family. In terms of assembly, homododecamer. Adopts a ring-like structure, composed of an arrangement of two hexameric rings stacked on top of one another.

The catalysed reaction is 3-dehydroquinate = 3-dehydroshikimate + H2O. It functions in the pathway aromatic compound metabolism; 3,4-dihydroxybenzoate biosynthesis; 3,4-dihydroxybenzoate from 3-dehydroquinate: step 1/2. In terms of biological role, is involved in the catabolism of quinate. Allows the utilization of quinate as carbon source via the beta-ketoadipate pathway. This is Catabolic 3-dehydroquinase 2 from Aspergillus fumigatus (strain ATCC MYA-4609 / CBS 101355 / FGSC A1100 / Af293) (Neosartorya fumigata).